A 268-amino-acid polypeptide reads, in one-letter code: 4,5-DOPA dioxygenase extradiol (268 aa).

4 residues coordinate Zn(2+): His-15, His-53, His-175, and His-229.

It belongs to the DODA-type extradiol aromatic ring-opening dioxygenase family. In terms of assembly, monomer. Zn(2+) is required as a cofactor.

Its subcellular location is the cytoplasm. It catalyses the reaction L-dopa + O2 = 4-(L-alanin-3-yl)-2-hydroxy-cis,cis-muconate 6-semialdehyde + H(+). It participates in pigment biosynthesis; betalain biosynthesis. Its function is as follows. Opens the cyclic ring of dihydroxy-phenylalanine (DOPA) between carbons 4 and 5, thus producing an unstable seco-DOPA that rearranges nonenzymatically to betalamic acid. Produces mainly (S)-betalamic acid. The chain is 4,5-DOPA dioxygenase extradiol (DODA) from Beta vulgaris (Sugar beet).